A 495-amino-acid polypeptide reads, in one-letter code: Ectonucleoside triphosphate diphosphohydrolase 2 (495 aa).

Residues 1–4 (MAGK) are Cytoplasmic-facing. The helical transmembrane segment at 5–25 (LVSLVPPLLLAAVGLAGLLLL) threads the bilayer. Topologically, residues 26-462 (CVPTQDVREP…PGLRKGTHFS (437 aa)) are extracellular. Asn-64 carries an N-linked (GlcNAc...) asparagine glycan. The cysteines at positions 75 and 99 are disulfide-linked. Asn-129 carries N-linked (GlcNAc...) asparagine glycosylation. Glu-165 (proton acceptor) is an active-site residue. An ATP-binding site is contributed by 204–208 (GASTQ). 2 disulfide bridges follow: Cys-242–Cys-284 and Cys-265–Cys-310. N-linked (GlcNAc...) asparagine glycosylation is found at Asn-294 and Asn-319. Intrachain disulfides connect Cys-323-Cys-328 and Cys-377-Cys-399. N-linked (GlcNAc...) asparagine glycosylation is found at Asn-378 and Asn-443. A helical transmembrane segment spans residues 463–483 (SWVALLLLFTVLILAALVLLL). The Cytoplasmic segment spans residues 484-495 (RQVRSAKSPGAL).

This sequence belongs to the GDA1/CD39 NTPase family. It depends on Ca(2+) as a cofactor. Requires Mg(2+) as cofactor.

Its subcellular location is the cell membrane. In the nervous system, could hydrolyze ATP and other nucleotides to regulate purinergic neurotransmission. Hydrolyzes ADP only to a marginal extent. This is Ectonucleoside triphosphate diphosphohydrolase 2 (Entpd2) from Mus musculus (Mouse).